The primary structure comprises 558 residues: Serine/threonine-protein phosphatase 2B catalytic subunit (558 aa).

Fe cation-binding residues include D128, H130, and D156. Residues D156 and N188 each contribute to the Zn(2+) site. The Proton donor role is filled by H189. Zn(2+) is bound by residues H237 and H319. Disordered stretches follow at residues 415-439 (LRED…NQDP) and 534-558 (ALER…LSTS). Residues 420 to 435 (ATTSPGSASPALPSAA) are compositionally biased toward low complexity. Over residues 534 to 548 (ALERATREADNDKKL) the composition is skewed to basic and acidic residues. Residues 549–558 (QTLSRRLSTS) show a composition bias toward polar residues.

The protein belongs to the PPP phosphatase family. PP-2B subfamily. Composed of two components (A and B), the A component is the catalytic subunit and the B component confers calcium sensitivity. Requires Fe(3+) as cofactor. Zn(2+) is required as a cofactor.

It carries out the reaction O-phospho-L-seryl-[protein] + H2O = L-seryl-[protein] + phosphate. The enzyme catalyses O-phospho-L-threonyl-[protein] + H2O = L-threonyl-[protein] + phosphate. Its function is as follows. Calcium-dependent, calmodulin-stimulated protein phosphatase. This subunit may have a role in the calmodulin activation of calcineurin. The chain is Serine/threonine-protein phosphatase 2B catalytic subunit (cna-1) from Neurospora crassa (strain ATCC 24698 / 74-OR23-1A / CBS 708.71 / DSM 1257 / FGSC 987).